A 240-amino-acid polypeptide reads, in one-letter code: Probable transcriptional regulatory protein Nmul_A2722 (240 aa).

Belongs to the TACO1 family.

It localises to the cytoplasm. The sequence is that of Probable transcriptional regulatory protein Nmul_A2722 from Nitrosospira multiformis (strain ATCC 25196 / NCIMB 11849 / C 71).